Consider the following 538-residue polypeptide: Methyl-accepting chemotaxis protein NahY (538 aa).

Residues 1-9 (MQQFTIRTR) lie on the Cytoplasmic side of the membrane. Residues 10–30 (LLMLVGAMFIGFITIELMGFS) traverse the membrane as a helical segment. Over 31 to 187 (ALQRGVASLN…AVVLYDSSRT (157 aa)) the chain is Periplasmic. A helical transmembrane segment spans residues 188–208 (MLALLLLGILICGGVFATRLI). The HAMP domain maps to 209 to 261 (RSIIHPLTTLKDAAARVALGDLSQSIQVSGRNEVTDVQQSVQAMQANLRNTLQ). The Cytoplasmic segment spans residues 209-538 (RSIIHPLTTL…LNNLVNRFSM (330 aa)). A Methyl-accepting transducer domain is found at 266 to 502 (SAAQLAAAAE…EVDRNLVAIS (237 aa)).

The protein belongs to the methyl-accepting chemotaxis (MCP) protein family.

The protein localises to the cell inner membrane. Chemotactic-signal transducers respond to changes in the concentration of attractants and repellents in the environment, transduce a signal from the outside to the inside of the cell, and facilitate sensory adaptation through the variation of the level of methylation. Chemoreceptor for naphthalene or a related compound. May facilitate biodegradation. The sequence is that of Methyl-accepting chemotaxis protein NahY (nahY) from Pseudomonas putida (Arthrobacter siderocapsulatus).